Reading from the N-terminus, the 819-residue chain is Ribosome-releasing factor 2, mitochondrial (819 aa).

The N-terminal 30 residues, 1–30 (MWKWNVRRWAGARVNISKNRLSVINVGSRY), are a transit peptide targeting the mitochondrion. One can recognise a tr-type G domain in the interval 39–327 (SKVRNIGIIA…AIVNYLPSPI (289 aa)). GTP contacts are provided by residues 48–55 (AHIDAGKT), 113–117 (DTPGH), and 165–168 (NKMD).

The protein belongs to the TRAFAC class translation factor GTPase superfamily. Classic translation factor GTPase family. EF-G/EF-2 subfamily.

It localises to the mitochondrion. Its function is as follows. Mitochondrial GTPase that mediates the disassembly of ribosomes from messenger RNA at the termination of mitochondrial protein biosynthesis. Not involved in the GTP-dependent ribosomal translocation step during translation elongation. In Saccharomyces cerevisiae (strain RM11-1a) (Baker's yeast), this protein is Ribosome-releasing factor 2, mitochondrial.